Consider the following 382-residue polypeptide: ATP phosphoribosyltransferase regulatory subunit (382 aa).

The protein belongs to the class-II aminoacyl-tRNA synthetase family. HisZ subfamily. As to quaternary structure, heteromultimer composed of HisG and HisZ subunits.

Its subcellular location is the cytoplasm. The protein operates within amino-acid biosynthesis; L-histidine biosynthesis; L-histidine from 5-phospho-alpha-D-ribose 1-diphosphate: step 1/9. Required for the first step of histidine biosynthesis. May allow the feedback regulation of ATP phosphoribosyltransferase activity by histidine. This Burkholderia cenocepacia (strain ATCC BAA-245 / DSM 16553 / LMG 16656 / NCTC 13227 / J2315 / CF5610) (Burkholderia cepacia (strain J2315)) protein is ATP phosphoribosyltransferase regulatory subunit.